The chain runs to 468 residues: Glutamate--tRNA ligase (468 aa).

A 'HIGH' region motif is present at residues 11-21 (PSPTGFIHLGN). A 'KMSKS' region motif is present at residues 243–247 (KMSKR). Lys246 lines the ATP pocket.

This sequence belongs to the class-I aminoacyl-tRNA synthetase family. Glutamate--tRNA ligase type 1 subfamily. In terms of assembly, monomer.

The protein resides in the cytoplasm. It carries out the reaction tRNA(Glu) + L-glutamate + ATP = L-glutamyl-tRNA(Glu) + AMP + diphosphate. Functionally, catalyzes the attachment of glutamate to tRNA(Glu) in a two-step reaction: glutamate is first activated by ATP to form Glu-AMP and then transferred to the acceptor end of tRNA(Glu). In Delftia acidovorans (strain DSM 14801 / SPH-1), this protein is Glutamate--tRNA ligase.